Reading from the N-terminus, the 400-residue chain is Putative lysosomal acid lipase/cholesteryl ester hydrolase (400 aa).

The first 17 residues, 1–17 (MWRLIIIAILFQGLVNS), serve as a signal peptide directing secretion. N-linked (GlcNAc...) asparagine glycosylation is found at Asn-34, Asn-129, and Asn-159. One can recognise an AB hydrolase-1 domain in the interval 78-378 (PAVFLQHGLL…EWEHLDFIWG (301 aa)). Ser-172 serves as the catalytic Charge relay system. The N-linked (GlcNAc...) asparagine glycan is linked to Asn-271. The active-site Charge relay system is His-372.

The protein belongs to the AB hydrolase superfamily. Lipase family. As to expression, expressed by the venom gland.

It localises to the secreted. The enzyme catalyses a sterol ester + H2O = a sterol + a fatty acid + H(+). Its function is as follows. In physiological conditions, is crucial for intracellular hydrolysis of cholesteryl esters and triglycerides that have been internalized via receptor-mediated endocytosis of lipoprotein particles. In venom, the biological contribution is unknown. In Crotalus adamanteus (Eastern diamondback rattlesnake), this protein is Putative lysosomal acid lipase/cholesteryl ester hydrolase.